Here is a 237-residue protein sequence, read N- to C-terminus: Uridylate kinase (237 aa).

9–12 (KLSG) serves as a coordination point for ATP. Residue G51 coordinates UMP. ATP is bound by residues G52 and R56. Residues D71 and 132 to 139 (CGNPFFTT) each bind UMP. Residues T159, Y165, and D168 each coordinate ATP.

The protein belongs to the UMP kinase family. As to quaternary structure, homohexamer.

The protein localises to the cytoplasm. The enzyme catalyses UMP + ATP = UDP + ADP. It functions in the pathway pyrimidine metabolism; CTP biosynthesis via de novo pathway; UDP from UMP (UMPK route): step 1/1. With respect to regulation, inhibited by UTP. In terms of biological role, catalyzes the reversible phosphorylation of UMP to UDP. This is Uridylate kinase from Prochlorococcus marinus (strain MIT 9313).